Here is a 300-residue protein sequence, read N- to C-terminus: Acetyl-coenzyme A carboxylase carboxyl transferase subunit beta 2 (300 aa).

One can recognise a CoA carboxyltransferase N-terminal domain in the interval 26–294 (VWVKCPSCRE…SGAYSSEAVA (269 aa)). The Zn(2+) site is built by cysteine 30, cysteine 33, cysteine 49, and cysteine 51. The C4-type zinc finger occupies 30–51 (CPSCRELIYHKQLAERMKVCRC).

It belongs to the AccD/PCCB family. In terms of assembly, acetyl-CoA carboxylase is a heterohexamer composed of biotin carboxyl carrier protein (AccB), biotin carboxylase (AccC) and two subunits each of ACCase subunit alpha (AccA) and ACCase subunit beta (AccD). Zn(2+) is required as a cofactor.

It localises to the cytoplasm. It catalyses the reaction N(6)-carboxybiotinyl-L-lysyl-[protein] + acetyl-CoA = N(6)-biotinyl-L-lysyl-[protein] + malonyl-CoA. It participates in lipid metabolism; malonyl-CoA biosynthesis; malonyl-CoA from acetyl-CoA: step 1/1. Functionally, component of the acetyl coenzyme A carboxylase (ACC) complex. Biotin carboxylase (BC) catalyzes the carboxylation of biotin on its carrier protein (BCCP) and then the CO(2) group is transferred by the transcarboxylase to acetyl-CoA to form malonyl-CoA. In Roseiflexus castenholzii (strain DSM 13941 / HLO8), this protein is Acetyl-coenzyme A carboxylase carboxyl transferase subunit beta 2.